The following is a 586-amino-acid chain: Zinc finger protein Eos (586 aa).

Disordered regions lie at residues 1 to 42 (MHTP…APDF) and 68 to 98 (EKEF…SANS). Over residues 25 to 34 (QGKDNLEREL) the composition is skewed to basic and acidic residues. Residues 79-98 (SVSTPNSQHSSPSRSLSANS) show a composition bias toward polar residues. K100 is covalently cross-linked (Glycyl lysine isopeptide (Lys-Gly) (interchain with G-Cter in SUMO2)). S105 is modified (phosphoserine). C2H2-type zinc fingers lie at residues 159-181 (LKCD…KRSH), 187-209 (FHCN…IKLH), 215-237 (FKCP…LRTH), and 248-271 (YKCN…ERCH). Positions 281–586 (AQALTGQPGD…HIVRGEHKVG (306 aa)) are interaction with FOXP3. At K335 the chain carries N6-acetyllysine. A disordered region spans residues 413–490 (RLELPGSREA…QPPPTIVVGR (78 aa)). Positions 423 to 433 (GEGPEDLGDGG) match the CTBP-binding motif PEDLG motif. Positions 476-485 (QGPPPQPPPT) are enriched in pro residues. K501 is covalently cross-linked (Glycyl lysine isopeptide (Lys-Gly) (interchain with G-Cter in SUMO2)). 2 consecutive C2H2-type zinc fingers follow at residues 531 to 553 (FKCE…MGCH) and 559 to 583 (FECN…RGEH).

This sequence belongs to the Ikaros C2H2-type zinc-finger protein family. Self-associates. Interacts with other family members; IKZF1, IKZF2, IKZF3 and IKZF5. Interacts with CTBP2, SPI1 and MITF. Interacts with FOXP3 and CTBP1. As to expression, expressed mainly in the brain. Up-regulated in long term cultured astrocytes. Down-regulated during osteoclast differentiation.

Its subcellular location is the nucleus. DNA-binding protein that binds to the 5'GGGAATRCC-3' Ikaros-binding sequence. Interacts with SPI1 and MITF to repress transcription of the CTSK and ACP5 promoters via recruitment of corepressors SIN3A and CTBP2. May be involved in the development of central and peripheral nervous systems. Essential for the inhibitory function of regulatory T-cells (Treg). Mediates FOXP3-mediated gene silencing in regulatory T-cells (Treg) via recruitment of corepressor CTBP1. This is Zinc finger protein Eos (Ikzf4) from Mus musculus (Mouse).